The sequence spans 381 residues: Deoxyguanosinetriphosphate triphosphohydrolase-like protein (381 aa).

In terms of domain architecture, HD spans 76–203 (RMTHTLEVAG…ADLSDEIAYT (128 aa)).

The protein belongs to the dGTPase family. Type 2 subfamily.

The protein is Deoxyguanosinetriphosphate triphosphohydrolase-like protein of Leptospira interrogans serogroup Icterohaemorrhagiae serovar copenhageni (strain Fiocruz L1-130).